The sequence spans 246 residues: Major prion protein (246 aa).

The signal sequence occupies residues 1-15 (MLVVFVATWSDLGLC). The interval 16–223 (KKRPKPGGWN…ESQAYYQRGS (208 aa)) is interaction with GRB2, ERI3 and SYN1. A disordered region spans residues 18 to 100 (RPKPGGWNTG…QWHKPSKPKT (83 aa)). A run of 5 repeats spans residues 44–52 (PQGGGGWGQ), 53–60 (PHGGGWGQ), 61–68 (PHGGGWGQ), 69–76 (PHGGGWGQ), and 77–84 (PHGGGWGQ). Positions 44–84 (PQGGGGWGQPHGGGWGQPHGGGWGQPHGGGWGQPHGGGWGQ) are 5 X 8 AA tandem repeats of P-H-G-G-G-W-G-Q. Residues 45–88 (QGGGGWGQPHGGGWGQPHGGGWGQPHGGGWGQPHGGGWGQGGGT) are compositionally biased toward gly residues. Cu(2+) is bound by residues His-54, Gly-55, Gly-56, His-62, Gly-63, Gly-64, His-70, Gly-71, Gly-72, His-78, Gly-79, and Gly-80. Basic residues predominate over residues 91-100 (QWHKPSKPKT). Residues Cys-172 and Cys-207 are joined by a disulfide bond. N-linked (GlcNAc...) asparagine glycosylation is found at Asn-174 and Asn-190. Ser-223 is lipidated: GPI-anchor amidated serine. The propeptide at 224–246 (SMVLFSSPPVILLISFLIFLIVG) is removed in mature form.

It belongs to the prion family. As to quaternary structure, monomer and homodimer. Has a tendency to aggregate into amyloid fibrils containing a cross-beta spine, formed by a steric zipper of superposed beta-strands. Soluble oligomers may represent an intermediate stage on the path to fibril formation. Copper binding may promote oligomerization. Interacts with GRB2, APP, ERI3/PRNPIP and SYN1. Mislocalized cytosolically exposed PrP interacts with MGRN1; this interaction alters MGRN1 subcellular location and causes lysosomal enlargement. Interacts with KIAA1191.

The protein resides in the cell membrane. The protein localises to the golgi apparatus. In terms of biological role, its primary physiological function is unclear. Has cytoprotective activity against internal or environmental stresses. May play a role in neuronal development and synaptic plasticity. May be required for neuronal myelin sheath maintenance. May play a role in iron uptake and iron homeostasis. Soluble oligomers are toxic to cultured neuroblastoma cells and induce apoptosis (in vitro). Association with GPC1 (via its heparan sulfate chains) targets PRNP to lipid rafts. Also provides Cu(2+) or Zn(2+) for the ascorbate-mediated GPC1 deaminase degradation of its heparan sulfate side chains. The polypeptide is Major prion protein (PRNP) (Erythrocebus patas (Red guenon)).